We begin with the raw amino-acid sequence, 316 residues long: Sideroflexin-4 (316 aa).

The next 5 helical transmembrane spans lie at 83-103, 141-161, 174-194, 230-250, and 263-283; these read QVFLPISAPLVVGSLIAHKGI, LLILGAVSYSTVTGALPQIIL, ICRSFLPVPLAAGLAAFNILV, ISRATLFGTTAALPTFLMALL, and IAPIGSMCTVITFGLMIPVSF.

This sequence belongs to the sideroflexin family.

Its subcellular location is the mitochondrion inner membrane. Functionally, mitochondrial amino-acid transporter. Does not act as a serine transporter: not able to mediate transport of serine into mitochondria. The protein is Sideroflexin-4 of Danio rerio (Zebrafish).